Consider the following 238-residue polypeptide: Purine nucleoside phosphorylase DeoD-type (238 aa).

Position 4 (His-4) interacts with a purine D-ribonucleoside. Phosphate contacts are provided by residues Gly-20, Arg-24, Arg-43, and 87–90 (RVGS). Residues 179–181 (EME) and 203–204 (SD) each bind a purine D-ribonucleoside. Asp-204 acts as the Proton donor in catalysis.

The protein belongs to the PNP/UDP phosphorylase family. In terms of assembly, homohexamer; trimer of homodimers.

The catalysed reaction is a purine D-ribonucleoside + phosphate = a purine nucleobase + alpha-D-ribose 1-phosphate. It carries out the reaction a purine 2'-deoxy-D-ribonucleoside + phosphate = a purine nucleobase + 2-deoxy-alpha-D-ribose 1-phosphate. Catalyzes the reversible phosphorolytic breakdown of the N-glycosidic bond in the beta-(deoxy)ribonucleoside molecules, with the formation of the corresponding free purine bases and pentose-1-phosphate. This is Purine nucleoside phosphorylase DeoD-type from Pasteurella multocida (strain Pm70).